The sequence spans 142 residues: Protein OrfX1 (142 aa).

The protein belongs to the TULIP P47 family. As to quaternary structure, orfX1 was not detected as part of a crude toxin extract that includes BoNTA2/NTNH, P47, OrfX2 and OrfX3.

Part of a botulinum neurotoxin type A2 (BoNT) locus; may be part of a progenitor toxin complex required to protect BoNT during its passage through the host gastrointestinal tract. Binds phosphatidylinositol (3,4) bisphosphate, phosphatidylethanolamine and phosphatidylserine. In Clostridium botulinum (strain Kyoto / Type A2), this protein is Protein OrfX1 (orfX1).